A 247-amino-acid polypeptide reads, in one-letter code: Protein IRON-RELATED TRANSCRIPTION FACTOR 2 (247 aa).

The short motif at 68-75 (HRKLSHNA) is the Nuclear localization signal element. The tract at residues 68–81 (HRKLSHNAYERDRR) is basic motif. Positions 68-119 (HRKLSHNAYERDRRKQLNELYSSLRALLPDADHTKLSIPTTVSRVLKYIPEL) constitute a bHLH domain. The helix-loop-helix motif stretch occupies residues 82–119 (KQLNELYSSLRALLPDADHTKLSIPTTVSRVLKYIPEL).

The protein belongs to the bHLH protein family. In terms of assembly, forms homodimers. Interacts with BHLH156 in the nucleus. Expressed constitutively at low levels in the roots. Also observed in flowers, developing seeds, embryos and vascular bundles.

The protein resides in the nucleus. It is found in the cytoplasm. Functionally, transcription activator that binds to the DNA motif 5'-CACGTGG-3' in the promoter of iron (Fe) deficiency-inducible genes as well as of genes involved in iron homeostasis, thus contributing to basal tolerance to iron deficiency, iron uptake from soil and iron transport, particularly during seed maturation and germination. Promotes the accumulation of mugineic acid family phytosiderophores (MAs). Required for ethylene-mediated signaling during iron deficiency responses. Improves growth and yield, especially in calcareous soil with low iron availability. Promotes iron concentration in shoots and grain. This Oryza sativa subsp. japonica (Rice) protein is Protein IRON-RELATED TRANSCRIPTION FACTOR 2.